Reading from the N-terminus, the 316-residue chain is Acetyl-coenzyme A carboxylase carboxyl transferase subunit alpha (316 aa).

Positions Glu-35–Asp-292 constitute a CoA carboxyltransferase C-terminal domain.

This sequence belongs to the AccA family. Acetyl-CoA carboxylase is a heterohexamer composed of biotin carboxyl carrier protein (AccB), biotin carboxylase (AccC) and two subunits each of ACCase subunit alpha (AccA) and ACCase subunit beta (AccD).

It localises to the cytoplasm. The enzyme catalyses N(6)-carboxybiotinyl-L-lysyl-[protein] + acetyl-CoA = N(6)-biotinyl-L-lysyl-[protein] + malonyl-CoA. It functions in the pathway lipid metabolism; malonyl-CoA biosynthesis; malonyl-CoA from acetyl-CoA: step 1/1. Component of the acetyl coenzyme A carboxylase (ACC) complex. First, biotin carboxylase catalyzes the carboxylation of biotin on its carrier protein (BCCP) and then the CO(2) group is transferred by the carboxyltransferase to acetyl-CoA to form malonyl-CoA. The sequence is that of Acetyl-coenzyme A carboxylase carboxyl transferase subunit alpha from Alkaliphilus oremlandii (strain OhILAs) (Clostridium oremlandii (strain OhILAs)).